Consider the following 744-residue polypeptide: Leucine-rich repeat extensin-like protein 1 (744 aa).

Residues 1–26 (MLFPPLRSLFLFTLLLSSVCFLQIKA) form the signal peptide. N-linked (GlcNAc...) asparagine glycosylation is found at Asn-71 and Asn-77. LRR repeat units lie at residues 122–145 (LSDL…TFNR), 147–170 (KLLY…VLSL), 171–194 (PSLK…LFDR), 196–217 (LDAI…MGNS), 219–240 (VSAL…IGQM), 241–265 (GKTL…IGNL), 266–289 (KKVT…VGNM), 290–313 (KSLE…ICQL), and 315–336 (NLEN…CAAS). N-linked (GlcNAc...) asparagine glycosylation is present at Asn-253. N-linked (GlcNAc...) asparagine glycosylation is found at Asn-318 and Asn-344. Residues 381–404 (FSPPPPTFKMSPEVRTLPPPIYVY) form an LRR 10 repeat. The tract at residues 382-744 (SPPPPTFKMS…ASPPPPPSYY (363 aa)) is contains the Ser-Pro(4) repeats. Disordered regions lie at residues 408–445 (PPPP…PPPP), 518–537 (VYSS…PESS), 555–576 (PSPV…VYYP), and 658–744 (PPPS…PSYY). Residues 430–439 (SKMSPSVRAY) are compositionally biased toward low complexity. Pro residues predominate over residues 704 to 729 (YEPPPEYSYSSSPPPPSPTSYFPPMP).

Post-translationally, hydroxylated on proline residues in the S-P-P-P-P repeat. In terms of processing, O-glycosylated on hydroxyprolines. Expressed in root hair cells (at protein level).

The protein localises to the secreted. It is found in the cell wall. Its function is as follows. Modulates cell morphogenesis by regulating cell wall formation and assembly, and/or growth polarization. Together with LRX2, component of the extracellular mechanism regulating root hair morphogenesis and elongation. The protein is Leucine-rich repeat extensin-like protein 1 (LRX1) of Arabidopsis thaliana (Mouse-ear cress).